The following is a 188-amino-acid chain: MNMEEQILNDYLLSQGRLQSIISLEQWRQLFPQRYREDPLIERLYEYCTQQRQKRLAKLRANIHLESQVIGKSRIDRMLATNVEKLQTVSHASTLHDVEEFYTSHSAKPLDISEINERLSEAVQSAYTKLNEEKERCTQLTLKMNSQIASLSDFQWSKEPNVDESIHLVESLIESLEKAAPSAIEELD.

This sequence belongs to the NKP2 family. Component of the inner kinetochore constitutive centromere-associated network (CCAN) (also known as central kinetochore Sim4 complex in fission yeast), which is composed of at least cnl2, cnp3, cnp20, fta1, fta2, fta3, fta4, fta6, fta7, mal2, mhf1, mhf2, mis6, mis15, mis17, sim4 and wip1.

The protein localises to the cytoplasm. The protein resides in the nucleus. Its subcellular location is the chromosome. It localises to the centromere. It is found in the kinetochore. Its function is as follows. Component of the kinetochore, a multiprotein complex that assembles on centromeric DNA and attaches chromosomes to spindle microtubules, mediating chromosome segregation and sister chromatid segregation during meiosis and mitosis. Component of the inner kinetochore constitutive centromere-associated network (CCAN), which serves as a structural platform for outer kinetochore assembly. This Schizosaccharomyces pombe (strain 972 / ATCC 24843) (Fission yeast) protein is Inner kinetochore subunit cnl2 (cnl2).